Consider the following 1392-residue polypeptide: MNNPKWTPAQQAAIDLKGQLLVAAAAGSGKTAVLVQRLFKQITDVDEQVDVDRFLVVTFTKAAAAEMRERIGKALDEALFGAAEPAQVEHLLQQRALLYRASITTLHSFCMELIRQYFYLIELDPAFRVADEAEADLLRQDTLEDLFEAYYGEETPAFQSLVDAFGTDRDDQPLMASILRLHEFAMSQVHPGEWLEHLPAAYDWHSLDDLMESPWGQVVRQGVRDKVEEGLILLERAYRLAELPGGPVHYLPVLEDDQSRLGFLREMAEKGTWSDIETAFKSAAAFPGLPRGSKKNLPDSLIDEENSKRLREESKKARDEAKKKLEEIKNTVFSVPLTDQLPFLNKMGELVGTLAQVTQHFAREYQKAKRQRNCVDFSDLEHYALQLLAKDKQPTEIALKLQAYYAEVLVDEYQDINPVQERILQLVSRQEEGKANLFMVGDVKQSIYRFRMADPGLFLRKYGEFPHYQEGGGAAPNLVIDLNQNFRSRPEVIQGINYLFYQIMTEGAGEIIYDEQAALRPGAKFVSDGELRTAEGPIEVHLFDPKAIDLSLGQKRGAEDAATGADSPAKGEGEEFEQNREPESGDDESSLEEAETARIEARLVAARIQKMVLEREFQIHDKELGDYRPVQYADIVILMRSLASVASVYAEEFQKAGIPVYAETNSGYFGTNEVDTVLSLLKIIDNPRLDIPFAAVLRSPLVGMNGTELGKLRSLLPQGDFYETLVLTFWAGDAHRQEEGHEFYSEIREILGKHWESLPQLEVKVRHILETSPEIKEKVDAFFPKLQEWRHRSRRTSLADLLWHLYEDTGYLAYVGTLPAGAQRQANLRVLYDRACRYEATNYRGLFRFLRFLEKFQSQGKDLGNASIVGEKENVVRFITVHSSKGLEFPVVFIAGLGKKFNTRSLSSQLLLHSHLGVGIPLIDIENQVRYPSVIQYAVKERLWQEALAEELRILYVALTRGKERLFLFGHQHKLAEAINKWRSLALSCPDTAFPDGQLRGAKTYLDWLGPALVRHPEDLFKLGSFPTASELPDSSSQWKVILHDQIAGKGPVQEATSSQDEIILPDQETLGEREASEETEIPGETEASGKTEIPGETKNSEETKTSEDKKNLEAQTPETADLDTKNLQEEVFRQLNWQYPYPEGVNQSAKTSVSELKRQSLWYMDNEYSSPSSSSSSSPSALSAPSFLRPQFIVSRKELTPAERGTAVHAAIQHLPLALWRDTWEELAQEVRESMLQEHIDSLIRREILSAEQGGAVSVSQLKNLLDSTSGKRLWEAEEVRREVPFTLSLRLRAQKEPVLVQGIIDAVLLSHQEHEAQVMDFKTDNLAGVPDPELVLTQRYGLQLGLYALAVERLLKVPVRECIIYATSLNREFVMQREAVQAALESVVIV.

Residues 3–489 (NPKWTPAQQA…IDLNQNFRSR (487 aa)) enclose the UvrD-like helicase ATP-binding domain. 24–31 (AAAGSGKT) is an ATP binding site. Disordered regions lie at residues 291-319 (RGSK…KARD), 556-594 (RGAE…LEEA), and 1051-1126 (GPVQ…LDTK). Basic and acidic residues-rich tracts occupy residues 305-319 (ENSK…KARD) and 569-583 (AKGE…REPE). One can recognise a UvrD-like helicase C-terminal domain in the interval 556–886 (RGAEDAATGA…RFITVHSSKG (331 aa)). Positions 584–594 (SGDDESSLEEA) are enriched in acidic residues. Residues 1088-1113 (ASGKTEIPGETKNSEETKTSEDKKNL) are compositionally biased toward basic and acidic residues.

The protein belongs to the helicase family. AddA subfamily. Heterodimer of AddA and AddB/RexB. The cofactor is Mg(2+).

It carries out the reaction Couples ATP hydrolysis with the unwinding of duplex DNA by translocating in the 3'-5' direction.. The catalysed reaction is ATP + H2O = ADP + phosphate + H(+). Its function is as follows. The heterodimer acts as both an ATP-dependent DNA helicase and an ATP-dependent, dual-direction single-stranded exonuclease. Recognizes the chi site generating a DNA molecule suitable for the initiation of homologous recombination. The AddA nuclease domain is required for chi fragment generation; this subunit has the helicase and 3' -&gt; 5' nuclease activities. In Desulfitobacterium hafniense (strain Y51), this protein is ATP-dependent helicase/nuclease subunit A.